Consider the following 424-residue polypeptide: MANIRREKGLNGTIAIPGDKSISHRAVMFGAIAEGTTKVSNFLLGEDCLSTIACFRKLGVKIDQSGNDVTIYGKGLTGLQEPKEVLDVGNSGTTIRLMLGILANVPFHCTIIGDDSIGKRPMKRVTDPLREMNAQIDGREDGQYTPLSIRGGNIKGIHYDSPVASAQVKSAILLAGLKGEGVTTVTEPLQSRDHTERMLRAFGCTVEVTGQTVSLRGGQSLIGTEIEVPGDISSAAFFLVAGAIVPNSKIVLKNVGLNPTRTGIIDVLQKMGAILSVDHVRNEEFEPCGDITIETSKLQGIEIGGSLIPRLIDEIPIIALLATQATGTTVIKDAEELKVKETNRIDTVVQELKKLGVKIEATSDGMIIYGNQKLQGGIVDSHGDHRIGMMLAIASCIADGEVEIQRSDAVSVSYPNFFDQLASL.

The 3-phosphoshikimate site is built by K20, S21, and R25. K20 is a phosphoenolpyruvate binding site. Phosphoenolpyruvate is bound by residues G92 and R120. Positions 165, 167, 313, and 340 each coordinate 3-phosphoshikimate. Residue Q167 coordinates phosphoenolpyruvate. D313 acts as the Proton acceptor in catalysis. Positions 344 and 386 each coordinate phosphoenolpyruvate.

It belongs to the EPSP synthase family. As to quaternary structure, monomer.

The protein resides in the cytoplasm. It carries out the reaction 3-phosphoshikimate + phosphoenolpyruvate = 5-O-(1-carboxyvinyl)-3-phosphoshikimate + phosphate. Its pathway is metabolic intermediate biosynthesis; chorismate biosynthesis; chorismate from D-erythrose 4-phosphate and phosphoenolpyruvate: step 6/7. In terms of biological role, catalyzes the transfer of the enolpyruvyl moiety of phosphoenolpyruvate (PEP) to the 5-hydroxyl of shikimate-3-phosphate (S3P) to produce enolpyruvyl shikimate-3-phosphate and inorganic phosphate. This Bacillus cytotoxicus (strain DSM 22905 / CIP 110041 / 391-98 / NVH 391-98) protein is 3-phosphoshikimate 1-carboxyvinyltransferase.